We begin with the raw amino-acid sequence, 302 residues long: 4-hydroxy-tetrahydrodipicolinate synthase (302 aa).

Residue Thr46 participates in pyruvate binding. Tyr134 (proton donor/acceptor) is an active-site residue. Lys162 (schiff-base intermediate with substrate) is an active-site residue. Residue Ile204 coordinates pyruvate.

It belongs to the DapA family. As to quaternary structure, homotetramer; dimer of dimers.

The protein localises to the cytoplasm. The catalysed reaction is L-aspartate 4-semialdehyde + pyruvate = (2S,4S)-4-hydroxy-2,3,4,5-tetrahydrodipicolinate + H2O + H(+). The protein operates within amino-acid biosynthesis; L-lysine biosynthesis via DAP pathway; (S)-tetrahydrodipicolinate from L-aspartate: step 3/4. Its function is as follows. Catalyzes the condensation of (S)-aspartate-beta-semialdehyde [(S)-ASA] and pyruvate to 4-hydroxy-tetrahydrodipicolinate (HTPA). This is 4-hydroxy-tetrahydrodipicolinate synthase from Xanthomonas axonopodis pv. citri (strain 306).